The primary structure comprises 369 residues: MYTTGNHTINDSFGTAFMIGSFDVRYYGILYATGILVAIIAGILTLKYKYKVDDNPYFYYVFIGIISIIFGARTWSFIIGDSIVGVTPFFAIHQGGLAIQGGVIFTITTGLIFFFFILRKPKYYVKKNYLVYENHNLVTKTFYKQASMWIYADAIIPTILIGQAIGRWGNFFNHEVYGQGLTAEQALNQWGFLKVLMPGVFEHMFINENGVTLFRVPIFLIESFFNVIAFIIIVFLLDFVKELKTGGRTMLYFFTTGIIRLIIETQRDSQFKFVTSIVTSVLFLLGGSIGFIFTQWIFPRFRNKKNYFFLFNKVKIYFIGLFKNYLNKYKNLTKEEIRKKLEPSSTIYSKNFSEMFFYADDYDLMIKKD.

3 helical membrane passes run 26–46 (YYGI…ILTL), 60–80 (YVFI…FIIG), and 97–117 (LAIQ…FFFI). Arg-167 provides a ligand contact to a 1,2-diacyl-sn-glycero-3-phospho-(1'-sn-glycerol). 2 helical membrane-spanning segments follow: residues 216–236 (VPIF…IVFL) and 273–293 (FVTS…GFIF).

Belongs to the Lgt family.

It is found in the cell membrane. The catalysed reaction is L-cysteinyl-[prolipoprotein] + a 1,2-diacyl-sn-glycero-3-phospho-(1'-sn-glycerol) = an S-1,2-diacyl-sn-glyceryl-L-cysteinyl-[prolipoprotein] + sn-glycerol 1-phosphate + H(+). It functions in the pathway protein modification; lipoprotein biosynthesis (diacylglyceryl transfer). Functionally, catalyzes the transfer of the diacylglyceryl group from phosphatidylglycerol to the sulfhydryl group of the N-terminal cysteine of a prolipoprotein, the first step in the formation of mature lipoproteins. This chain is Phosphatidylglycerol--prolipoprotein diacylglyceryl transferase, found in Mycoplasmoides gallisepticum (strain R(low / passage 15 / clone 2)) (Mycoplasma gallisepticum).